Reading from the N-terminus, the 356-residue chain is Protein-arginine kinase (356 aa).

The Phosphagen kinase C-terminal domain occupies 22 to 249; that stretch reads FRPISTLSLS…SKILSAETEA (228 aa). Residues 25 to 29, 172 to 176, and 202 to 207 contribute to the ATP site; these read ISTLS, VARAF, and SSLLPL.

It belongs to the ATP:guanido phosphotransferase family.

The enzyme catalyses L-arginyl-[protein] + ATP = N(omega)-phospho-L-arginyl-[protein] + ADP + H(+). In terms of biological role, catalyzes the specific phosphorylation of arginine residues in proteins. In Chlamydia muridarum (strain MoPn / Nigg), this protein is Protein-arginine kinase.